Reading from the N-terminus, the 336-residue chain is Ventral anterior homeobox 1 (336 aa).

Residues 1-34 are compositionally biased toward basic and acidic residues; that stretch reads MFGKTDKMDVRCHSDTEAARVSKNAHKESREIKG. 2 disordered regions span residues 1-39 and 50-69; these read MFGK…EGSL and AFSA…NSSA. Residues 100–159 constitute a DNA-binding region (homeobox); sequence PKRTRTSFTAEQLYRLEMEFQRCQYVVGRERTELARQLNLSETQVKVWFQNRRTKQKKDQ. The span at 236 to 250 shows a compositional bias: low complexity; the sequence is PGPAGAASQHPPAVG. 2 disordered regions span residues 236-267 and 316-336; these read PGPA…HAGA and SAFE…KALD. Positions 325–336 are enriched in basic and acidic residues; sequence NNKEGAEKKALD.

Belongs to the EMX homeobox family.

The protein resides in the nucleus. Its function is as follows. Transcription factor that may function in dorsoventral specification of the forebrain. Required for axon guidance and major tract formation in the developing forebrain. May contribute to the differentiation of the neuroretina, pigmented epithelium and optic stalk. The chain is Ventral anterior homeobox 1 (Vax1) from Rattus norvegicus (Rat).